A 184-amino-acid chain; its full sequence is Succinate dehydrogenase cytochrome b560 subunit, mitochondrial (184 aa).

Residues 65–94 (LTWMLSGFHRISGCVMAGTLLVGGLGFAVL) traverse the membrane as a helical segment. Topologically, residues 95-114 (PLDFTTFVEYIRGWNLPCAV) are mitochondrial intermembrane. Residues 115 to 139 (TAVFKYIIAFPIIFHTLNGIRFLGF) traverse the membrane as a helical segment. Histidine 129 is a binding site for heme. The Mitochondrial matrix segment spans residues 140-147 (DLAKGVDN). Residues 148 to 169 (IGQVYKSGWLVFGVSAVIALAI) traverse the membrane as a helical segment. The Mitochondrial intermembrane segment spans residues 170–172 (VIN).

The protein belongs to the cytochrome b560 family. In terms of assembly, component of complex II composed of four subunits: a flavoprotein (FP), iron-sulfur protein (IP), and a cytochrome b560 composed of two transmembrane proteins. The cofactor is heme.

Its subcellular location is the mitochondrion inner membrane. The protein operates within carbohydrate metabolism; tricarboxylic acid cycle. In terms of biological role, membrane-anchoring subunit of succinate dehydrogenase (SDH) that is involved in complex II of the mitochondrial electron transport chain and is responsible for transferring electrons from succinate to ubiquinone (coenzyme Q). Mediates resistance to enteropathogenic E.coli infection. The sequence is that of Succinate dehydrogenase cytochrome b560 subunit, mitochondrial (mev-1) from Caenorhabditis briggsae.